Here is a 373-residue protein sequence, read N- to C-terminus: Melanoma-associated antigen C2 (373 aa).

The disordered stretch occupies residues 1–102 (MPPVPGVPFR…QGPSQSPLSS (102 aa)). Low complexity predominate over residues 40 to 60 (SSASSTLYLVFSPSSFSTSSS). Residues 85-94 (SSPPQGPPQG) show a composition bias toward pro residues. Residues 135–373 (SSFTYTLDEK…VMSSNVSFSE (239 aa)) form an interaction with TRIM28 region. The MAGE domain occupies 141-336 (LDEKVAELVE…SSFPSWYKDA (196 aa)).

As to quaternary structure, interacts with TRIM28 and UBE2H. In terms of tissue distribution, not expressed in normal tissues, except in germ cells in the seminiferous tubules and in Purkinje cells of the cerebellum. Expressed in various tumors, including melanoma, lymphoma, as well as pancreatic cancer, mammary gland cancer, non-small cell lung cancer and liver cancer. In hepatocellular carcinoma, there is an inverse correlation between tumor differentiation and protein expression, i.e. the lower the differentiation, the higher percentage of expression.

Its subcellular location is the cytoplasm. It localises to the nucleus. In terms of biological role, proposed to enhance ubiquitin ligase activity of RING-type zinc finger-containing E3 ubiquitin-protein ligases. In vitro enhances ubiquitin ligase activity of TRIM28 and stimulates p53/TP53 ubiquitination in presence of Ubl-conjugating enzyme UBE2H leading to p53/TP53 degradation. Proposed to act through recruitment and/or stabilization of the Ubl-conjugating enzymes (E2) at the E3:substrate complex. In Homo sapiens (Human), this protein is Melanoma-associated antigen C2 (MAGEC2).